A 482-amino-acid chain; its full sequence is tRNA sulfurtransferase (482 aa).

One can recognise a THUMP domain in the interval 61 to 165; that stretch reads LAIRDALTRI…DDRLLLIKGR (105 aa). ATP-binding positions include 183–184, Lys265, Gly287, and Gln296; that span reads LI. Cysteines 344 and 456 form a disulfide. The 79-residue stretch at 404–482 folds into the Rhodanese domain; the sequence is FGPNDVILDI…GFANVKVYRP (79 aa). Catalysis depends on Cys456, which acts as the Cysteine persulfide intermediate.

Belongs to the ThiI family.

It is found in the cytoplasm. The enzyme catalyses [ThiI sulfur-carrier protein]-S-sulfanyl-L-cysteine + a uridine in tRNA + 2 reduced [2Fe-2S]-[ferredoxin] + ATP + H(+) = [ThiI sulfur-carrier protein]-L-cysteine + a 4-thiouridine in tRNA + 2 oxidized [2Fe-2S]-[ferredoxin] + AMP + diphosphate. The catalysed reaction is [ThiS sulfur-carrier protein]-C-terminal Gly-Gly-AMP + S-sulfanyl-L-cysteinyl-[cysteine desulfurase] + AH2 = [ThiS sulfur-carrier protein]-C-terminal-Gly-aminoethanethioate + L-cysteinyl-[cysteine desulfurase] + A + AMP + 2 H(+). The protein operates within cofactor biosynthesis; thiamine diphosphate biosynthesis. Its function is as follows. Catalyzes the ATP-dependent transfer of a sulfur to tRNA to produce 4-thiouridine in position 8 of tRNAs, which functions as a near-UV photosensor. Also catalyzes the transfer of sulfur to the sulfur carrier protein ThiS, forming ThiS-thiocarboxylate. This is a step in the synthesis of thiazole, in the thiamine biosynthesis pathway. The sulfur is donated as persulfide by IscS. In Salmonella heidelberg (strain SL476), this protein is tRNA sulfurtransferase.